Consider the following 303-residue polypeptide: Target of rapamycin complex subunit LST8 (303 aa).

WD repeat units follow at residues 1-27 (MSVILVSAGYDHTIRFWEALTGVCSRT), 30-68 (HSDSQVNRLEITNDKKLLATAGHQNVRLYDIRTTNPNPV), 73-112 (GHRGNVTSVSFQQDNRWMVTSSEDGTIKVWDVRSPSIPRN), 114-153 (KHNAPVNEVVIHPNQGELISCDRDGNIRIWDLGENQCTHQ), 157-196 (EDDTSLQSLSMASDGSMLAAANTKGNCYVWEMPNHTDASH), 205-244 (AHSTYITRILLSSDVKHLATCSADHTARVWSIDDDFKLET), and 248-287 (GHQRWVWDCAFSADSAYLVTASSDHYVRLWDLSTREIVRQ).

It belongs to the WD repeat LST8 family. As to quaternary structure, the target of rapamycin complex 1 (TORC1) is composed of at least KOG1, LST8, TCO89 and either TOR1 (TORC1-A) or TOR2 (TORC1-B). TORC1 binds to and is inhibited by FKBP-rapamycin. Interacts with PIB2; following activation of PIB2 by glutamine or cysteine and as part of the TORC1 complex. The target of rapamycin complex 2 (TORC2) is composed of at least AVO1, AVO2, BIT61, LST8, TOR2 and TSC11. TORC2 forms a homodimer. Contrary to TORC1, TORC2 does not bind to and is not sensitive to FKBP-rapamycin. LST8 binds to the C-terminal kinase domain in TOR2.

The protein localises to the cell membrane. It is found in the vacuole membrane. Functionally, essential component of both TORC1 and TORC2. TORC1 regulates multiple cellular processes to control cell growth in response to environmental signals. Nutrient limitation and environmental stress signals cause inactivation of TORC1. Active TORC1 positively controls ribosome biogenesis via control of rRNA, ribosomal protein and tRNA gene expression, and rRNA processing. TORC1 positively controls protein biosynthesis by regulation of mRNA stability, translation initiation factor activity, and high-affinity amino acid permeases that serve to provide amino acids for use by the translation machinery. TORC1 also promotes growth by sequestering a number of nutrient and general stress-responsive transcription factors in the cytoplasm. TORC1 negatively controls macroautophagy, a process to recycle surplus cytoplasmic mass under nutrient starvation conditions. LST8 is involved in the negative regulation of transcription factors GLN3 and RTG1-RTG3, limiting the synthesis of alpha-ketoglutarate, glutamate and glutamine. LST8 is required for targeting of amino acid permeases (AAPs) to the plasma membrane. TORC2 regulates cell cycle-dependent polarization of the actin-cytoskeleton, cell wall integrity, and receptor endocytosis. TORC2 controls polarity of the actin cytoskeleton, which is required for orienting the secretory pathway toward discrete growth sites, via the RHO1/PKC1/MAPK cell integrity pathway. LST8 is involved in maintenance of cell wall integrity. LST8 modulates TOR2 kinase activity. This Saccharomyces cerevisiae (strain ATCC 204508 / S288c) (Baker's yeast) protein is Target of rapamycin complex subunit LST8.